Here is a 128-residue protein sequence, read N- to C-terminus: Fluoride-specific ion channel FluC 1 (128 aa).

A run of 4 helical transmembrane segments spans residues 10 to 30, 32 to 52, 59 to 79, and 93 to 113; these read VAFF…AFSF, GTVI…YFFL, AWLT…FSSF, and FGAL…AWAG. Glycine 71 and threonine 74 together coordinate Na(+).

The protein belongs to the fluoride channel Fluc/FEX (TC 1.A.43) family.

The protein localises to the cell membrane. It carries out the reaction fluoride(in) = fluoride(out). Na(+) is not transported, but it plays an essential structural role and its presence is essential for fluoride channel function. Its function is as follows. Fluoride-specific ion channel. Important for reducing fluoride concentration in the cell, thus reducing its toxicity. This chain is Fluoride-specific ion channel FluC 1, found in Lactobacillus delbrueckii subsp. bulgaricus (strain ATCC 11842 / DSM 20081 / BCRC 10696 / JCM 1002 / NBRC 13953 / NCIMB 11778 / NCTC 12712 / WDCM 00102 / Lb 14).